The following is a 372-amino-acid chain: Putative isochorismate synthase MenF (372 aa).

Catalysis depends on Lys119, which acts as the Proton acceptor. The active-site Proton donor is the Glu175. The Mg(2+) site is built by Glu219 and Glu356.

This sequence belongs to the isochorismate synthase family. It depends on Mg(2+) as a cofactor.

It carries out the reaction chorismate = isochorismate. It participates in quinol/quinone metabolism; 1,4-dihydroxy-2-naphthoate biosynthesis; 1,4-dihydroxy-2-naphthoate from chorismate: step 1/7. Its pathway is quinol/quinone metabolism; menaquinone biosynthesis. In terms of biological role, catalyzes the conversion of chorismate to isochorismate. The sequence is that of Putative isochorismate synthase MenF (menF) from Mycobacterium tuberculosis (strain CDC 1551 / Oshkosh).